The sequence spans 513 residues: Cytochrome P450 1A2 (513 aa).

O-linked (GlcNAc) serine glycosylation occurs at serine 68. Cysteine 456 lines the heme pocket.

It belongs to the cytochrome P450 family. Interacts with PGRMC1; the interaction requires PGRMC1 homodimerization. Heme is required as a cofactor.

It is found in the endoplasmic reticulum membrane. The protein localises to the microsome membrane. The catalysed reaction is an organic molecule + reduced [NADPH--hemoprotein reductase] + O2 = an alcohol + oxidized [NADPH--hemoprotein reductase] + H2O + H(+). It carries out the reaction 17beta-estradiol + reduced [NADPH--hemoprotein reductase] + O2 = 2-hydroxy-17beta-estradiol + oxidized [NADPH--hemoprotein reductase] + H2O + H(+). The enzyme catalyses 17beta-estradiol + reduced [NADPH--hemoprotein reductase] + O2 = 4-hydroxy-17beta-estradiol + oxidized [NADPH--hemoprotein reductase] + H2O + H(+). It catalyses the reaction estrone + reduced [NADPH--hemoprotein reductase] + O2 = 2-hydroxyestrone + oxidized [NADPH--hemoprotein reductase] + H2O + H(+). The catalysed reaction is estrone + reduced [NADPH--hemoprotein reductase] + O2 = 4-hydroxyestrone + oxidized [NADPH--hemoprotein reductase] + H2O + H(+). It carries out the reaction cholesterol + reduced [NADPH--hemoprotein reductase] + O2 = 25-hydroxycholesterol + oxidized [NADPH--hemoprotein reductase] + H2O + H(+). The enzyme catalyses all-trans-retinol + reduced [NADPH--hemoprotein reductase] + O2 = all-trans-retinal + oxidized [NADPH--hemoprotein reductase] + 2 H2O + H(+). It catalyses the reaction all-trans-retinal + reduced [NADPH--hemoprotein reductase] + O2 = all-trans-retinoate + oxidized [NADPH--hemoprotein reductase] + H2O + 2 H(+). The catalysed reaction is (5Z,8Z,11Z,14Z)-eicosatetraenoate + reduced [NADPH--hemoprotein reductase] + O2 = (14R,15S)-epoxy-(5Z,8Z,11Z)-eicosatrienoate + oxidized [NADPH--hemoprotein reductase] + H2O + H(+). It carries out the reaction (5Z,8Z,11Z,14Z)-eicosatetraenoate + reduced [NADPH--hemoprotein reductase] + O2 = (14S,15R)-epoxy-(5Z,8Z,11Z)-eicosatrienoate + oxidized [NADPH--hemoprotein reductase] + H2O + H(+). The enzyme catalyses (5Z,8Z,11Z,14Z,17Z)-eicosapentaenoate + reduced [NADPH--hemoprotein reductase] + O2 = (17R,18S)-epoxy-(5Z,8Z,11Z,14Z)-eicosatetraenoate + oxidized [NADPH--hemoprotein reductase] + H2O + H(+). It catalyses the reaction (4Z,7Z,10Z,13Z,16Z,19Z)-docosahexaenoate + reduced [NADPH--hemoprotein reductase] + O2 = (19R,20S)-epoxy-(4Z,7Z,10Z,13Z,16Z)-docosapentaenoate + oxidized [NADPH--hemoprotein reductase] + H2O + H(+). The catalysed reaction is (5S)-hydroperoxy-(6E,8Z,11Z,14Z)-eicosatetraenoate = 5-oxo-(6E,8Z,11Z,14Z)-eicosatetraenoate + H2O. It carries out the reaction (12S)-hydroperoxy-(5Z,8Z,10E,14Z)-eicosatetraenoate = 12-oxo-(5Z,8Z,10E,14Z)-eicosatetraenoate + H2O. The enzyme catalyses (15S)-hydroperoxy-(5Z,8Z,11Z,13E)-eicosatetraenoate = 15-oxo-(5Z,8Z,11Z,13E)-eicosatetraenoate + H2O. It catalyses the reaction (13S)-hydroperoxy-(9Z,11E)-octadecadienoate = 13-oxo-(9Z,11E)-octadecadienoate + H2O. The catalysed reaction is (5Z,8Z,11Z,14Z)-eicosatetraenoate + reduced [NADPH--hemoprotein reductase] + O2 = 13-hydroxy-(5Z,8Z,11Z,14Z)-eicosatetraenoate + oxidized [NADPH--hemoprotein reductase] + H2O + H(+). It carries out the reaction (5Z,8Z,11Z,14Z)-eicosatetraenoate + reduced [NADPH--hemoprotein reductase] + O2 = 19-hydroxy-(5Z,8Z,11Z,14Z)-eicosatetraenoate + oxidized [NADPH--hemoprotein reductase] + H2O + H(+). The enzyme catalyses (9Z,12Z)-octadecadienoate + reduced [NADPH--hemoprotein reductase] + O2 = 11-hydroxy-(9Z,12Z)-octadecadienoate + oxidized [NADPH--hemoprotein reductase] + H2O + H(+). It participates in cofactor metabolism; retinol metabolism. Its pathway is steroid metabolism; cholesterol metabolism. It functions in the pathway lipid metabolism; arachidonate metabolism. Functionally, a cytochrome P450 monooxygenase involved in the metabolism of various endogenous substrates, including fatty acids, steroid hormones and vitamins. Mechanistically, uses molecular oxygen inserting one oxygen atom into a substrate, and reducing the second into a water molecule, with two electrons provided by NADPH via cytochrome P450 reductase (NADPH--hemoprotein reductase). Catalyzes the hydroxylation of carbon-hydrogen bonds. Exhibits high catalytic activity for the formation of hydroxyestrogens from estrone (E1) and 17beta-estradiol (E2), namely 2-hydroxy E1 and E2. Metabolizes cholesterol toward 25-hydroxycholesterol, a physiological regulator of cellular cholesterol homeostasis. May act as a major enzyme for all-trans retinoic acid biosynthesis in the liver. Catalyzes two successive oxidative transformation of all-trans retinol to all-trans retinal and then to the active form all-trans retinoic acid. Primarily catalyzes stereoselective epoxidation of the last double bond of polyunsaturated fatty acids (PUFA), displaying a strong preference for the (R,S) stereoisomer. Catalyzes bisallylic hydroxylation and omega-1 hydroxylation of PUFA. May also participate in eicosanoids metabolism by converting hydroperoxide species into oxo metabolites (lipoxygenase-like reaction, NADPH-independent). Plays a role in the oxidative metabolism of xenobiotics. Catalyzes the N-hydroxylation of heterocyclic amines and the O-deethylation of phenacetin. Metabolizes caffeine via N3-demethylation. The polypeptide is Cytochrome P450 1A2 (Cyp1a2) (Rattus norvegicus (Rat)).